We begin with the raw amino-acid sequence, 260 residues long: Glutamate racemase (260 aa).

Substrate contacts are provided by residues 7–8 and 39–40; these read DS and YG. The active-site Proton donor/acceptor is the Cys71. Residue 72-73 coordinates substrate; it reads NT. Cys182 functions as the Proton donor/acceptor in the catalytic mechanism. 183 to 184 provides a ligand contact to substrate; the sequence is TH.

Belongs to the aspartate/glutamate racemases family.

The catalysed reaction is L-glutamate = D-glutamate. Its pathway is cell wall biogenesis; peptidoglycan biosynthesis. Functionally, provides the (R)-glutamate required for cell wall biosynthesis. The sequence is that of Glutamate racemase from Sulfurihydrogenibium sp. (strain YO3AOP1).